The chain runs to 597 residues: Elongation factor 4 (597 aa).

One can recognise a tr-type G domain in the interval 2–184 (KHIRNFSIIA…TIVKSIPAPE (183 aa)). Residues 14–19 (DHGKST) and 131–134 (NKID) each bind GTP.

It belongs to the TRAFAC class translation factor GTPase superfamily. Classic translation factor GTPase family. LepA subfamily.

It localises to the cell inner membrane. The enzyme catalyses GTP + H2O = GDP + phosphate + H(+). Its function is as follows. Required for accurate and efficient protein synthesis under certain stress conditions. May act as a fidelity factor of the translation reaction, by catalyzing a one-codon backward translocation of tRNAs on improperly translocated ribosomes. Back-translocation proceeds from a post-translocation (POST) complex to a pre-translocation (PRE) complex, thus giving elongation factor G a second chance to translocate the tRNAs correctly. Binds to ribosomes in a GTP-dependent manner. The chain is Elongation factor 4 from Aliivibrio fischeri (strain MJ11) (Vibrio fischeri).